A 221-amino-acid chain; its full sequence is Oxaloacetate tautomerase FAHD1, mitochondrial (221 aa).

The transit peptide at 1–24 directs the protein to the mitochondrion; it reads MAASRPLSRFWEWGKNIVCVGRNY. Position 37 is a phosphoserine (serine 37). Glutamate 68, glutamate 70, and aspartate 99 together coordinate Mg(2+). Lysine 110 bears the N6-acetyllysine mark. Residue lysine 112 is modified to N6-succinyllysine.

Belongs to the FAH family. As to quaternary structure, homodimer. It depends on Mg(2+) as a cofactor. The cofactor is Mn(2+).

Its subcellular location is the mitochondrion. It localises to the cytoplasm. It is found in the cytosol. The enzyme catalyses oxaloacetate = enol-oxaloacetate. The catalysed reaction is oxaloacetate + H(+) = pyruvate + CO2. It catalyses the reaction a 3-acylpyruvate + H2O = a carboxylate + pyruvate + H(+). It carries out the reaction acetylpyruvate + H2O = acetate + pyruvate + H(+). The enzyme catalyses 3-fumarylpyruvate + H2O = fumarate + pyruvate + H(+). With respect to regulation, oxaloacetate decarboxylation is competitively inhibited by oxalate. In terms of biological role, tautomerase that converts enol-oxaloacetate, a strong inhibitor of succinate dehydrogenase, to the physiological keto form of oxaloacetate. It is thereby required to maximize aerobic respiration efficiency by preventing succinate dehydrogenase inhibition. Also acts as a weak oxaloacetate decarboxylase (ODx), catalyzing the decarboxylation of oxaloacetate (OAA) to pyruvate and CO(2), and as such is likely a regulatory enzyme in the TCA cycle. Also displays acylpyruvase activity, being able to hydrolyze acetylpyruvate and fumarylpyruvate in vitro. This is Oxaloacetate tautomerase FAHD1, mitochondrial (FAHD1) from Pongo abelii (Sumatran orangutan).